A 552-amino-acid polypeptide reads, in one-letter code: uncharacterized protein (552 aa).

Residues 1–59 (MPLEKTNTHDSTATVEDQEATDNPMHLTQSRMLDLAGNPNRTTSRQSETLFPNGVDLNY) form a disordered region. Over residues 39-50 (PNRTTSRQSETL) the composition is skewed to polar residues. 12 helical membrane passes run 116 to 136 (ITIVNSLLVVCSAFGSSVIAG), 158 to 178 (LMVVGFGIGPLVISPLSEMIG), 181 to 201 (IVYLVTLMIYIVLQIPCALAP), 203 to 223 (IACLLIVRFFCGCFGCTPLTL), 238 to 258 (GLAIAFFAAGPYAGPTLGPLV), 271 to 291 (WIFWVNMIYMFVMYLTLLPVP), 345 to 365 (ILVCISGYIALIYALLYGYFF), 383 to 403 (GLMFIPILVGVVGALSTTPFL), 424 to 444 (LVGMCIASPFIPTGLLIFAWT), 450 to 470 (IWIGPAFSGAPFGYGMVLFYF), 484 to 506 (CASALAAKTMVRSAGGAAFPLFI), and 519 to 539 (FFLLGMVAVAAIPIPFTFYLF).

Belongs to the major facilitator superfamily.

It is found in the membrane. This is an uncharacterized protein from Schizosaccharomyces pombe (strain 972 / ATCC 24843) (Fission yeast).